The primary structure comprises 557 residues: MKAILRASRIGRVILRYRLDALLEGTPAERWLRLAKPFVPRASAEIAAQSRGARLRLALQELGPIFVKFGQILSTRRDLIPADVAEELTLLQDRVKPFDGQAARLIVEAALGLPVSVAFASFDTVPLASASIAQVHAATLPPDANGVRREVVVKVLRPEIERQIDADIALLHSLATLVERTHPRADKIRPREVVAEIEGTLAAELDLQREGANASVLRRFWEGSDDLYVPEVIWSHTAERALTLERVYGIPSDDIAKLDAAGIDRKALAAKGVRVFYTQVFRDNFFHADAHAGNIWVDSDPERRLNPRFIALDFGIMGQLSQEDQYYLAENFMAIFHKDYRRMAELHVEAGWMPSNVRIDELEAAARSVCEPYFNRPLSEISLAQVLIKLFRVAQRYELTLQPQLILLQKTLLNIEGVGRQLDPRLDIWAVARPVLERILRERYSPRRVLRELSKRLPEIMTHAPDMPRLVYSWLTQQVEGRHQIAIRSPELLALDLSLRKLQTRVVTAITGSGLLVVAAVLYGLHPDGWYLGTVPVWSWISGGAGSAALLVAWLRR.

One can recognise a Protein kinase domain in the interval 121 to 509; sequence SFDTVPLASA…RKLQTRVVTA (389 aa). ATP contacts are provided by residues 127-135 and lysine 154; that span reads LASASIAQV. Aspartate 289 serves as the catalytic Proton acceptor. The next 2 membrane-spanning stretches (helical) occupy residues 506–526 and 535–555; these read VVTAITGSGLLVVAAVLYGLH and VPVWSWISGGAGSAALLVAWL.

The protein belongs to the ABC1 family. UbiB subfamily.

It localises to the cell inner membrane. The protein operates within cofactor biosynthesis; ubiquinone biosynthesis [regulation]. Its function is as follows. Is probably a protein kinase regulator of UbiI activity which is involved in aerobic coenzyme Q (ubiquinone) biosynthesis. The protein is Probable protein kinase UbiB of Xanthomonas axonopodis pv. citri (strain 306).